Reading from the N-terminus, the 463-residue chain is Vacuolar cation/proton exchanger 1 (463 aa).

Alanine 2 carries the N-acetylalanine modification. Topologically, residues 2–68 (AGIVTEPWSV…LKDFLSNLQE (67 aa)) are cytoplasmic. The required for autoinhibitory regulation stretch occupies residues 25–33 (SRELRLGRT). Positions 56–62 (YKGLKDF) are required for interaction with autoinhibitory region. The chain crosses the membrane as a helical span at residues 69-89 (VILGTKLAILFPAIPAAIICT). The tract at residues 87–95 (ICTYCGVSQ) is required for Ca(2+)/H(+) exchange activity. Residues 90–96 (YCGVSQP) lie on the Extracellular side of the membrane. Residues 97 to 116 (WIFGLSLLGLTPLAERVSFL) form a helical membrane-spanning segment. Over 117 to 127 (TEQLAFYTGPT) the chain is Cytoplasmic. Residues 128–148 (LGGLLNATCGNATELIIAILA) form a helical membrane-spanning segment. Positions 137–172 (GNATELIIAILALTNNKVAVVKYSLLGSILSNLLLV) are cation selection. Residues 149–161 (LTNNKVAVVKYSL) lie on the Extracellular side of the membrane. Residues 162 to 182 (LGSILSNLLLVLGTSLFCGGI) traverse the membrane as a helical segment. Residues 183-197 (ANIRREQRFDRKQAD) lie on the Cytoplasmic side of the membrane. Residues 198-218 (VNFFLLLLGFLCHLLPLLVGY) traverse the membrane as a helical segment. Residues 219 to 238 (LKNGEASAAVLSDMQLSISR) lie on the Extracellular side of the membrane. Residues 239–259 (GFSIVMLISYIAYLVFQLWTH) traverse the membrane as a helical segment. Topologically, residues 260 to 281 (RQLFDAQEQEDEYDDDVEQETA) are cytoplasmic. A helical transmembrane segment spans residues 282 to 302 (VISFWSGFAWLVGMTLVIALL). The Extracellular portion of the chain corresponds to 303-325 (SEYVVATIEEASDKWNLSVSFIS). Asparagine 318 is a glycosylation site (N-linked (GlcNAc...) asparagine). A helical transmembrane segment spans residues 326–346 (IILLPIVGNAAEHAGAVIFAF). The tract at residues 333–368 (GNAAEHAGAVIFAFKNKLDISLGVALGSATQIGLFV) is cation selection. The Cytoplasmic portion of the chain corresponds to 347–360 (KNKLDISLGVALGS). Residues 361 to 381 (ATQIGLFVVPLTIIVAWILGI) traverse the membrane as a helical segment. Residues 382 to 384 (NMD) lie on the Extracellular side of the membrane. Residues 385 to 405 (LNFGPLETGCLAVSIIITAFT) traverse the membrane as a helical segment. The Cytoplasmic segment spans residues 406-411 (LQDGSS). A helical transmembrane segment spans residues 412–432 (HYMKGLVLLLCYFIIAICFFV). Residues 433–463 (DKLPQKQNAIHLGHQAMNNVVTATGGGVFSS) lie on the Extracellular side of the membrane.

Belongs to the Ca(2+):cation antiporter (CaCA) (TC 2.A.19) family. Cation/proton exchanger (CAX) subfamily. As to quaternary structure, interacts with GRXS14 and CXIP4. In terms of tissue distribution, expressed at low levels in leaves, stems and flowers.

It is found in the vacuole membrane. Its activity is regulated as follows. Activated by monothiol glutaredoxin GRXS14 and CXIP4. Inhibited by excess of Ca(2+) and Cd(2+), Na(+) and K(+), but not Mn(2+). Functionally, vacuolar cation/proton exchanger (CAX). Translocates Ca(2+) and other metal ions into vacuoles using the proton gradient formed by H(+)-ATPase and H(+)-pyrophosphatase. Involved in ion homeostasis in association with CAX3. May play a role in cold-acclimation response. The polypeptide is Vacuolar cation/proton exchanger 1 (CAX1) (Arabidopsis thaliana (Mouse-ear cress)).